The sequence spans 183 residues: Gamma-crystallin N (183 aa).

Beta/gamma crystallin 'Greek key' domains lie at 6-46, 47-89, 95-136, and 138-180; these read GKII…RVET, GAWI…KPVR, YRLE…KVYG, and GAWV…RRVV.

It belongs to the beta/gamma-crystallin family. Monomer.

Functionally, crystallins are the dominant structural components of the vertebrate eye lens. The protein is Gamma-crystallin N (crygn) of Xenopus tropicalis (Western clawed frog).